Here is a 229-residue protein sequence, read N- to C-terminus: Transmembrane emp24 domain-containing protein 5 (229 aa).

Positions 1–27 (MGDKIWLPFPVLLLAALPPVLLPGAAG) are cleaved as a signal peptide. Topologically, residues 28–196 (FTPSLDSDFT…IQESNFDRVN (169 aa)) are lumenal. Positions 45-126 (KECFYQPMPL…EKVIFFELIL (82 aa)) constitute a GOLD domain. Residues 197–217 (FWSMVNLVVMVVVSAIQVYML) traverse the membrane as a helical segment. Residues 218–229 (KSLFEDKRKSRT) are Cytoplasmic-facing.

The protein belongs to the EMP24/GP25L family. In terms of assembly, interacts with TMED9 and TMED10.

The protein resides in the endoplasmic reticulum membrane. Its subcellular location is the golgi apparatus. It is found in the cis-Golgi network membrane. It localises to the endoplasmic reticulum-Golgi intermediate compartment membrane. Functionally, potential role in vesicular protein trafficking, mainly in the early secretory pathway. Required for the maintenance of the Golgi apparatus; involved in protein exchange between Golgi stacks during assembly. Probably not required for COPI-vesicle-mediated retrograde transport. In Homo sapiens (Human), this protein is Transmembrane emp24 domain-containing protein 5 (TMED5).